Consider the following 269-residue polypeptide: Thyroxine 5-deiodinase (269 aa).

Topologically, residues 1–14 (MLPAPHTCCRLLQQ) are cytoplasmic. A helical; Signal-anchor for type II membrane protein membrane pass occupies residues 15–35 (LLACCLLLPRFLLTVLLLWLL). Residues 36–269 (DFPCVRRRVI…TGNGALVIQV (234 aa)) lie on the Extracellular side of the membrane. Sec133 is an active-site residue. Position 133 (Sec133) is a non-standard amino acid, selenocysteine.

It belongs to the iodothyronine deiodinase family. Monomer. Homodimer. May undergo minor heretodimerization with DIO1 and DIO2.

It localises to the cell membrane. The protein localises to the endosome membrane. The enzyme catalyses 3,3',5'-triiodo-L-thyronine + iodide + A + H(+) = L-thyroxine + AH2. It catalyses the reaction 3,3'-diiodo-L-thyronine + iodide + A + H(+) = 3,3',5-triiodo-L-thyronine + AH2. It carries out the reaction 3-iodo-L-thyronine + iodide + A + H(+) = 3,5-diiodo-L-thyronine + AH2. The catalysed reaction is L-thyronine + iodide + A + H(+) = 3-iodo-L-thyronine + AH2. The enzyme catalyses 3',5'-diiodo-L-thyronine + iodide + A + H(+) = 3,3',5'-triiodo-L-thyronine + AH2. It catalyses the reaction 3'-iodo-L-thyronine + iodide + A + H(+) = 3,3'-diiodo-L-thyronine + AH2. It carries out the reaction 3,3',5'-triiodothyronamine + iodide + A + H(+) = 3,3',5,5'-tetraiodothyronamine + AH2. The catalysed reaction is 3',5'-diiodothyronamine + iodide + A + H(+) = 3,3',5'-triiodothyronamine + AH2. The enzyme catalyses 3,3'-diiodothyronamine + iodide + A + H(+) = 3,3',5-triiodothyronamine + AH2. It catalyses the reaction 3-iodothyronamine + iodide + A + H(+) = 3,5-diiodothyronamine + AH2. It carries out the reaction 3'-iodothyronamine + iodide + A + H(+) = 3,3'-diiodothyronamine + AH2. The catalysed reaction is thyronamine + iodide + A + H(+) = 3-iodothyronamine + AH2. Its function is as follows. Plays a crucial role in the metabolism of thyroid hormones (TH) and has specific roles in TH activation and inactivation by deiodination. Catalyzes the deiodination of L-thyroxine (T4) to 3,3',5'-triiodothyronine (rT3), 3,5-diiodothyronine (3,5-T2) to 3-monoiodothyronine (3-T1), rT3 to 3',5'-diiodothyronine (3',5'-T2) and 3,3'-diiodothyronine (3,3'-T2) to 3'-monoiodothyronine (3'-T1) via inner-ring deiodination (IRD). Catalyzes the deiodination of 3,5,3'-triiodothyronine (T3) to 3,3'-diiodothyronine (3,3'-T2) via IRD. Catalyzes the deiodination of 3-T1 to L-thyronine (T0) via outer-ring deiodination (ORD). Catalyzes the tyrosyl ring deiodinations of 3,3',5,5'-tetraiodothyronamine, 3,3',5'-triiodothyronamine, 3,5,3'-triiodothyronamine, 3,5-diiodothyronamine, 3,3'-diiodothyronamine and 3-iodothyronamine. This is Thyroxine 5-deiodinase (dio3) from Aquarana catesbeiana (American bullfrog).